We begin with the raw amino-acid sequence, 698 residues long: Ubiquitin-like modifier-activating enzyme ATG7 (698 aa).

The short motif at 11–13 is the FAP motif element; it reads FAP. K41 participates in a covalent cross-link: Glycyl lysine isopeptide (Lys-Gly) (interchain with G-Cter in ubiquitin). C567 serves as the catalytic Glycyl thioester intermediate. At S693 the chain carries Phosphoserine.

It belongs to the ATG7 family. Homodimer. Interacts with ATG3; this interaction is essential for the transfer of ATG8-like proteins's thioester from ATG7 to ATG3 and plays a role in the conjugation of ATG12 to ATG5. Interacts with ATG12. Interacts with ATG10. Forms intermediate conjugates with GABARAPL1. Forms intermediate conjugates with ATG8-like proteins such as GABARAP, GABARAPL2 or MAP1LC3A. Interacts with EP300 acetyltransferase. Interacts with FOXO1. Acetylated by EP300. Post-translationally, polyubiquitinated on Lys-41 via 'Lys-63'-linked ubiquitin by TRIM32; this modification positiely regulates ATG8 and ATG12 activating enzyme activity leading to initiation of autophagy under metabolic stress. In terms of tissue distribution, widely expressed, especially in kidney, liver, lymph nodes and bone marrow.

It localises to the cytoplasm. The protein resides in the preautophagosomal structure. Its function is as follows. E1-like activating enzyme involved in the 2 ubiquitin-like systems required for cytoplasm to vacuole transport (Cvt) and autophagy. Activates ATG12 for its conjugation with ATG5 as well as the ATG8 family proteins for their conjugation with phosphatidylethanolamine. Both systems are needed for the ATG8 association to Cvt vesicles and autophagosomes membranes. Facilitates LC3-I lipidation with phosphatidylethanolamine to form LC3-II which is found on autophagosomal membranes. Required for autophagic death induced by caspase-8 inhibition. Required for mitophagy which contributes to regulate mitochondrial quantity and quality by eliminating the mitochondria to a basal level to fulfill cellular energy requirements and preventing excess ROS production. Modulates p53/TP53 activity to regulate cell cycle and survival during metabolic stress. Also plays a key role in the maintenance of axonal homeostasis, the prevention of axonal degeneration, the maintenance of hematopoietic stem cells, the formation of Paneth cell granules, as well as in adipose differentiation. Plays a role in regulating the liver clock and glucose metabolism by mediating the autophagic degradation of CRY1 (clock repressor) in a time-dependent manner. This chain is Ubiquitin-like modifier-activating enzyme ATG7, found in Mus musculus (Mouse).